Here is a 236-residue protein sequence, read N- to C-terminus: Thiol:disulfide interchange protein DsbC (236 aa).

An N-terminal signal peptide occupies residues 1-20 (MKKGFMLFTLLAAFSGFAQA). A Thioredoxin domain is found at 36–231 (SSDIQPAPVA…MKEFLDEHQK (196 aa)). 2 disulfides stabilise this stretch: cysteine 118–cysteine 121 and cysteine 161–cysteine 183.

The protein belongs to the thioredoxin family. DsbC subfamily. As to quaternary structure, homodimer.

It localises to the periplasm. Functionally, required for disulfide bond formation in some periplasmic proteins. Acts by transferring its disulfide bond to other proteins and is reduced in the process. DsbC is reoxidized by a yet uncharacterized protein. Also acts as a disulfide isomerase. This is Thiol:disulfide interchange protein DsbC (dsbC) from Escherichia coli O157:H7.